Reading from the N-terminus, the 346-residue chain is Glycerol-3-phosphate dehydrogenase [NAD(P)+] (346 aa).

NADPH is bound by residues S11, W12, H32, R33, and K106. Positions 106, 137, and 139 each coordinate sn-glycerol 3-phosphate. An NADPH-binding site is contributed by A141. 5 residues coordinate sn-glycerol 3-phosphate: K193, D246, S256, R257, and N258. The Proton acceptor role is filled by K193. Residue R257 participates in NADPH binding. 2 residues coordinate NADPH: V281 and E283.

Belongs to the NAD-dependent glycerol-3-phosphate dehydrogenase family.

It is found in the cytoplasm. It catalyses the reaction sn-glycerol 3-phosphate + NAD(+) = dihydroxyacetone phosphate + NADH + H(+). It carries out the reaction sn-glycerol 3-phosphate + NADP(+) = dihydroxyacetone phosphate + NADPH + H(+). The protein operates within membrane lipid metabolism; glycerophospholipid metabolism. Catalyzes the reduction of the glycolytic intermediate dihydroxyacetone phosphate (DHAP) to sn-glycerol 3-phosphate (G3P), the key precursor for phospholipid synthesis. This chain is Glycerol-3-phosphate dehydrogenase [NAD(P)+], found in Bacillus licheniformis (strain ATCC 14580 / DSM 13 / JCM 2505 / CCUG 7422 / NBRC 12200 / NCIMB 9375 / NCTC 10341 / NRRL NRS-1264 / Gibson 46).